The following is a 286-amino-acid chain: Nucleotide-binding protein VC_2532 (286 aa).

Residue 8 to 15 participates in ATP binding; sequence GQSGAGKS. 56–59 serves as a coordination point for GTP; sequence DIRN.

This sequence belongs to the RapZ-like family.

Displays ATPase and GTPase activities. This chain is Nucleotide-binding protein VC_2532, found in Vibrio cholerae serotype O1 (strain ATCC 39315 / El Tor Inaba N16961).